The primary structure comprises 465 residues: MAELISKEGNKVEFKVSVPAAEVNRAYDQVWAGLARDVRVPGFRPGKAPRKVIENRVGKGYVESQVRDRLLETHYSQGLRELGLNLVDATVDPQDVQSGQAFEFTVKGETYPEVKLGDWQGLKVSAQAPEITDEVLEQTLSDLRERNASFEKAERPIEAADQVTIQELGEGDSEEGGSYPIYLDMAEEHVRNALLGKSAGDVVDITVPAHQHGDHEHAEHTVRVKVVEVSSKKLQDLNDEFATSLNYESMDKLRTDLREELERRAQQEGDNLRREELVGHLVEGMTVEIPQALIDRRREGMMSEIQDDLRRQGVQWKEYEAFMQEQGKLDEFEADLTKNAETRVRRDLALEQLATDLNAQVNEAEFNQTLMNLAQANGMNVQQLVQQLGQDGVQSYYISLLRERGLQRALAQLSGEGQSTEAASPKATGTEAAGTEQSEPAQTETAQNDAGQTETAQSEGEQQSE.

Residues 160–235 (ADQVTIQELG…VVEVSSKKLQ (76 aa)) form the PPIase FKBP-type domain. The interval 412 to 465 (QLSGEGQSTEAASPKATGTEAAGTEQSEPAQTETAQNDAGQTETAQSEGEQQSE) is disordered. Polar residues predominate over residues 435–465 (TEQSEPAQTETAQNDAGQTETAQSEGEQQSE).

Belongs to the FKBP-type PPIase family. Tig subfamily. As to quaternary structure, binds to the 50S ribosomal subunit via interactions with ribosomal protein L23. Also interacts with 23S rRNA and proteins L24 and L29 when complexed with the ribosome.

It localises to the cytoplasm. It carries out the reaction [protein]-peptidylproline (omega=180) = [protein]-peptidylproline (omega=0). In terms of biological role, involved in protein export. Acts as a chaperone by maintaining the newly synthesized protein in an open conformation. Functions as a peptidyl-prolyl cis-trans isomerase. Probably changes conformation upon binding to the ribosome (maybe in particular due to interaction with L24), exposing a hydrophobic crevice that is probably important for its chaperone activity. This Deinococcus radiodurans (strain ATCC 13939 / DSM 20539 / JCM 16871 / CCUG 27074 / LMG 4051 / NBRC 15346 / NCIMB 9279 / VKM B-1422 / R1) protein is Trigger factor (tig).